The sequence spans 426 residues: Protein arginine methyltransferase NDUFAF7 homolog, mitochondrial (426 aa).

The protein belongs to the NDUFAF7 family.

Its subcellular location is the mitochondrion. It carries out the reaction L-arginyl-[protein] + 2 S-adenosyl-L-methionine = N(omega),N(omega)'-dimethyl-L-arginyl-[protein] + 2 S-adenosyl-L-homocysteine + 2 H(+). Arginine methyltransferase involved in the assembly or stability of mitochondrial NADH:ubiquinone oxidoreductase complex (complex I). This chain is Protein arginine methyltransferase NDUFAF7 homolog, mitochondrial, found in Caenorhabditis elegans.